Here is a 914-residue protein sequence, read N- to C-terminus: PHD finger protein 14 (914 aa).

The tract at residues 19–276 is disordered; sequence DALDYDSSDD…EDSLLERPQT (258 aa). A compositionally biased stretch (low complexity) spans 53 to 68; the sequence is ESAAGSESDSDAAAAS. Over residues 90–102 the composition is skewed to basic and acidic residues; that stretch reads EKVKESFSEETSS. Composition is skewed to acidic residues over residues 155–168 and 191–233; these read ELNEMDDYDSEDDN and GEED…DSEE. Residues 285-346 form a PHD-type 1 zinc finger; sequence ILICCVCLGD…PWFCDACKNG (62 aa). Positions 288, 291, 305, 308, 313, 316, 340, 343, 351, 354, 371, 374, 407, 410, 424, 429, 434, 437, 461, and 464 each coordinate Zn(2+). The C2HC pre-PHD-type zinc finger occupies 348-381; the sequence is SPSCELCPSQDGIFKETDAGRWVHVVCALYVPGV. A PHD-type 2 zinc finger spans residues 405–465; that stretch reads KECSLCEDTR…PFFAYCKQHA (61 aa). A coiled-coil region spans residues 596-644; that stretch reads MIQIQDNIVEQKNLKDKLESEQEKLHMEYDKLCESLEDLQNVNGQLRTE. A PHD-type 3 zinc finger spans residues 692-746; it reads LYSCGICKKNQDQHLLLLCDTCKLHYHLGCLDPPLTRMPKKTKNSYWQCSECDQA. Zn(2+)-binding residues include C695, C698, C710, C713, H718, C721, C740, and C743. Positions 777 to 838 are disordered; the sequence is PQEMSPEPKK…PKADDTRTEC (62 aa). Over residues 792-802 the composition is skewed to basic residues; that stretch reads TRTRGQKRKRM. Over residues 803–817 the composition is skewed to basic and acidic residues; the sequence is SICEEEKMEEPLPRE. The segment at 835–888 adopts a PHD-type 4 zinc-finger fold; that stretch reads RTECTTCKGPGDNENLVRCDECRLCYHFGCLDPPLKKSPKQTGYGWICQECDTS. Zn(2+) is bound by residues C838, C841, C853, C856, H861, C864, C882, and C885. Residues 887-914 form a disordered region; the sequence is TSSSKEEEAQEVEEESVNEETAEQEIPD. The segment covering 894–914 has biased composition (acidic residues); sequence EAQEVEEESVNEETAEQEIPD.

As to quaternary structure, interacts with histone H3.

Its subcellular location is the nucleus. Its function is as follows. Histone-binding protein. Binds preferentially to unmodified histone H3 but can also bind to a lesser extent to histone H3 trimethylated at 'Lys-9' (H3K9me3) as well as to histone H3 monomethylated at 'Lys-27' (H3K27ac) and trimethylated at 'Lys-27' (H3K27me3). Represses PDGFRA expression, thus playing a role in regulation of mesenchymal cell proliferation. The chain is PHD finger protein 14 from Danio rerio (Zebrafish).